A 351-amino-acid polypeptide reads, in one-letter code: Prostaglandin reductase 2 (351 aa).

99-100 (FY) serves as a coordination point for substrate. Residues 165 to 168 (GACG), lysine 192, tyrosine 208, asparagine 231, 253 to 259 (CGQISQY), 287 to 289 (FTV), and asparagine 337 each bind NADP(+). 288 to 290 (TVL) provides a ligand contact to substrate.

It belongs to the NADP-dependent oxidoreductase L4BD family. As to quaternary structure, monomer. As to expression, widely expressed with highest levels in adipose tissues.

It localises to the cytoplasm. The catalysed reaction is 13,14-dihydro-15-oxo-prostaglandin E2 + NAD(+) = 15-oxoprostaglandin E2 + NADH + H(+). It catalyses the reaction 13,14-dihydro-15-oxo-prostaglandin E2 + NADP(+) = 15-oxoprostaglandin E2 + NADPH + H(+). It carries out the reaction 13,14-dihydro-15-oxo-PGF2alpha + NADP(+) = 15-oxoprostaglandin F2alpha + NADPH + H(+). The enzyme catalyses 13,14-dihydro-15-oxo-prostaglandin E1 + NADP(+) = 15-oxoprostaglandin E1 + NADPH + H(+). The catalysed reaction is 13,14-dihydro-15-oxo-prostaglandin F1alpha + NADP(+) = 15-oxoprostaglandin F1alpha + NADPH + H(+). In terms of biological role, functions as 15-oxo-prostaglandin 13-reductase and acts on 15-keto-PGE1, 15-keto-PGE2, 15-keto-PGE1-alpha and 15-keto-PGE2-alpha with highest activity towards 15-keto-PGE2. Overexpression represses transcriptional activity of PPARG and inhibits adipocyte differentiation. The sequence is that of Prostaglandin reductase 2 from Mus musculus (Mouse).